A 439-amino-acid polypeptide reads, in one-letter code: Probable non-inhibitory serpin-Z9 (439 aa).

Positions 12-44 (RRPPFPAGDANHRRLSSAPAPKPEAPAEAMPPP) are disordered. Over residues 31 to 44 (APKPEAPAEAMPPP) the composition is skewed to pro residues. The segment at 389 to 413 (GIEETSVSMGLGKPLPAQHFKADHP) is RCL.

The protein belongs to the serpin family.

The chain is Probable non-inhibitory serpin-Z9 from Oryza sativa subsp. japonica (Rice).